The sequence spans 179 residues: Large ribosomal subunit protein uL5 (179 aa).

Belongs to the universal ribosomal protein uL5 family. As to quaternary structure, part of the 50S ribosomal subunit; part of the 5S rRNA/L5/L18/L25 subcomplex. Contacts the 5S rRNA and the P site tRNA. Forms a bridge to the 30S subunit in the 70S ribosome.

Its function is as follows. This is one of the proteins that bind and probably mediate the attachment of the 5S RNA into the large ribosomal subunit, where it forms part of the central protuberance. In the 70S ribosome it contacts protein S13 of the 30S subunit (bridge B1b), connecting the 2 subunits; this bridge is implicated in subunit movement. Contacts the P site tRNA; the 5S rRNA and some of its associated proteins might help stabilize positioning of ribosome-bound tRNAs. In Herminiimonas arsenicoxydans, this protein is Large ribosomal subunit protein uL5.